The sequence spans 673 residues: Metal-nicotianamine transporter YSL1 (673 aa).

Residues 1–13 (MEIEQRRIMKREG) show a composition bias toward basic and acidic residues. The tract at residues 1-39 (MEIEQRRIMKREGEEEEDNNQLSLQEEEPDTEEEMSGRT) is disordered. The span at 14–34 (EEEEDNNQLSLQEEEPDTEEE) shows a compositional bias: acidic residues. 16 helical membrane-spanning segments follow: residues 46–66 (QITVRGVFVSIVIGVVFSVIA), 71–91 (LTTGIVPNLNSSAALLAFVFV), 119–139 (SAVACYGIAVGGGFASYLLGL), 163–183 (GLGWMTAYLFVVCFIGLFVLI), 225–245 (FMKYFSFSFLWGFFQWFFSGI), 260–280 (AWKQTFFFDFSMTFVGAGMIC), 283–303 (LVNLSLLLGAILSYGLMWPLL), 328–348 (VFLSVALILGDGLYTFVKILF), 392–412 (FAVSGYLTFAAVSTVVVPLIF), 420–440 (VIVAYIFAPSLAFCNAYGAGL), 442–462 (DINMAYNYGKIGLFVIAAVTG), 467–487 (VVAGLAGCGLIKSVVSVSCIL), 510–530 (IGTVVGCIVTPLSFFLFYKAF), 558–578 (FSALPLHCLQMCYGFFGFAVL), 604–624 (FLVGAYFAIDMCVGTLIVFVW), and 642–662 (GLICGEGLWTLPAAVLALAGV).

It belongs to the YSL (TC 2.A.67.2) family. As to expression, low levels of expression in leaves and shoots, but not detected in roots. Restricted to the vasculature, in the xylem parenchyma surrounding xylem tubes. Expressed in pollen grains, in the vasculature of petals and sepals, in the carpel veins, in the style underneath the stigmatic papillae, in the vascular tissue of the funiculus and in the chalazal endosperm.

The protein resides in the membrane. In terms of biological role, involved in iron loading of the seeds. Acts probably as a transporter of iron- and metal-nicotianamine chelates. In Arabidopsis thaliana (Mouse-ear cress), this protein is Metal-nicotianamine transporter YSL1 (YSL1).